The chain runs to 312 residues: Transcription initiation factor IIB-2 (312 aa).

The TFIIB-type zinc finger occupies 2-34; it reads SDAFCSDCKRHTEVVFDHSAGDTVCSECGLVLE. Zn(2+)-binding residues include Cys-6, Cys-9, Cys-26, and Cys-29. Tandem repeats lie at residues 115 to 192 and 216 to 290.

Belongs to the TFIIB family. Associates with TFIID-IIA (DA complex) to form TFIID-IIA-IIB (DAB-complex) which is then recognized by polymerase II.

The protein resides in the nucleus. Functionally, general factor that plays a major role in the activation of eukaryotic genes transcribed by RNA polymerase II. This Arabidopsis thaliana (Mouse-ear cress) protein is Transcription initiation factor IIB-2 (TFIIB2).